The chain runs to 81 residues: Large ribosomal subunit protein bL31B (81 aa).

It belongs to the bacterial ribosomal protein bL31 family. Type B subfamily. In terms of assembly, part of the 50S ribosomal subunit.

In Listeria innocua serovar 6a (strain ATCC BAA-680 / CLIP 11262), this protein is Large ribosomal subunit protein bL31B.